Reading from the N-terminus, the 611-residue chain is Phosphomethylpyrimidine synthase (611 aa).

Substrate contacts are provided by residues N212, M241, Y270, H306, 326–328 (SRG), 367–370 (DGLR), and E406. Position 410 (H410) interacts with Zn(2+). Y433 lines the substrate pocket. Residue H474 coordinates Zn(2+). [4Fe-4S] cluster is bound by residues C554, C557, and C562.

It belongs to the ThiC family. In terms of assembly, homodimer. Requires [4Fe-4S] cluster as cofactor.

It carries out the reaction 5-amino-1-(5-phospho-beta-D-ribosyl)imidazole + S-adenosyl-L-methionine = 4-amino-2-methyl-5-(phosphooxymethyl)pyrimidine + CO + 5'-deoxyadenosine + formate + L-methionine + 3 H(+). It participates in cofactor biosynthesis; thiamine diphosphate biosynthesis. Its function is as follows. Catalyzes the synthesis of the hydroxymethylpyrimidine phosphate (HMP-P) moiety of thiamine from aminoimidazole ribotide (AIR) in a radical S-adenosyl-L-methionine (SAM)-dependent reaction. The protein is Phosphomethylpyrimidine synthase of Bartonella bacilliformis (strain ATCC 35685 / KC583 / Herrer 020/F12,63).